A 204-amino-acid chain; its full sequence is Large ribosomal subunit protein uL4 (204 aa).

The disordered stretch occupies residues 49–74 (AKKRGEVSGGGKKPWSQKGGGRARAG). Over residues 55–71 (VSGGGKKPWSQKGGGRA) the composition is skewed to gly residues.

It belongs to the universal ribosomal protein uL4 family. Part of the 50S ribosomal subunit.

In terms of biological role, one of the primary rRNA binding proteins, this protein initially binds near the 5'-end of the 23S rRNA. It is important during the early stages of 50S assembly. It makes multiple contacts with different domains of the 23S rRNA in the assembled 50S subunit and ribosome. Functionally, forms part of the polypeptide exit tunnel. The sequence is that of Large ribosomal subunit protein uL4 from Wolinella succinogenes (strain ATCC 29543 / DSM 1740 / CCUG 13145 / JCM 31913 / LMG 7466 / NCTC 11488 / FDC 602W) (Vibrio succinogenes).